Here is an 872-residue protein sequence, read N- to C-terminus: Alanine--tRNA ligase (872 aa).

Positions 567, 571, 669, and 673 each coordinate Zn(2+).

The protein belongs to the class-II aminoacyl-tRNA synthetase family. It depends on Zn(2+) as a cofactor.

The protein resides in the cytoplasm. It carries out the reaction tRNA(Ala) + L-alanine + ATP = L-alanyl-tRNA(Ala) + AMP + diphosphate. Catalyzes the attachment of alanine to tRNA(Ala) in a two-step reaction: alanine is first activated by ATP to form Ala-AMP and then transferred to the acceptor end of tRNA(Ala). Also edits incorrectly charged Ser-tRNA(Ala) and Gly-tRNA(Ala) via its editing domain. The protein is Alanine--tRNA ligase of Streptococcus mutans serotype c (strain ATCC 700610 / UA159).